A 28-amino-acid polypeptide reads, in one-letter code: Potassium channel toxin kappa-KTx 2.9 (28 aa).

Disulfide bonds link cysteine 4-cysteine 22 and cysteine 8-cysteine 18.

The protein belongs to the short scorpion toxin superfamily. Potassium channel inhibitor family. Gamma-KTx 2 subfamily. Post-translationally, contains 2 disulfide bonds. As to expression, expressed by the venom gland.

It localises to the secreted. Its function is as follows. Reversibly blocks voltage-gated potassium channels Kv1.2/KCNA2 and Kv1.3/KCNA3. This chain is Potassium channel toxin kappa-KTx 2.9, found in Pandinus imperator (Emperor scorpion).